Here is a 537-residue protein sequence, read N- to C-terminus: Chaperonin GroEL (537 aa).

Residues 31-34 (TLGP), 87-91 (DGTTT), G415, and D495 each bind ATP.

It belongs to the chaperonin (HSP60) family. As to quaternary structure, forms a cylinder of 14 subunits composed of two heptameric rings stacked back-to-back. Interacts with the co-chaperonin GroES.

It localises to the cytoplasm. The catalysed reaction is ATP + H2O + a folded polypeptide = ADP + phosphate + an unfolded polypeptide.. Its function is as follows. Together with its co-chaperonin GroES, plays an essential role in assisting protein folding. The GroEL-GroES system forms a nano-cage that allows encapsulation of the non-native substrate proteins and provides a physical environment optimized to promote and accelerate protein folding. This Methanoregula boonei (strain DSM 21154 / JCM 14090 / 6A8) protein is Chaperonin GroEL.